The following is a 145-amino-acid chain: Extracellular globin-2 (145 aa).

The region spanning 3–145 (QCGVLEGLKV…HIEDGIKGHH (143 aa)) is the Globin domain. Cys4 and Cys133 are disulfide-bonded. His96 provides a ligand contact to heme b.

Belongs to the globin family. In terms of assembly, the extracellular hemoglobin of the earthworm consists of 12 subunits that have a hexagonal bilayer structure with a molecular weight near 3.8 million. Each one-twelfth subunit is composed primarily of disulfide linked trimers (chains A, B, and C) and monomers (chain D).

The polypeptide is Extracellular globin-2 (Lumbricus terrestris (Common earthworm)).